The chain runs to 178 residues: ATP synthase subunit delta (178 aa).

It belongs to the ATPase delta chain family. As to quaternary structure, F-type ATPases have 2 components, F(1) - the catalytic core - and F(0) - the membrane proton channel. F(1) has five subunits: alpha(3), beta(3), gamma(1), delta(1), epsilon(1). F(0) has three main subunits: a(1), b(2) and c(10-14). The alpha and beta chains form an alternating ring which encloses part of the gamma chain. F(1) is attached to F(0) by a central stalk formed by the gamma and epsilon chains, while a peripheral stalk is formed by the delta and b chains.

The protein resides in the cell inner membrane. In terms of biological role, f(1)F(0) ATP synthase produces ATP from ADP in the presence of a proton or sodium gradient. F-type ATPases consist of two structural domains, F(1) containing the extramembraneous catalytic core and F(0) containing the membrane proton channel, linked together by a central stalk and a peripheral stalk. During catalysis, ATP synthesis in the catalytic domain of F(1) is coupled via a rotary mechanism of the central stalk subunits to proton translocation. This protein is part of the stalk that links CF(0) to CF(1). It either transmits conformational changes from CF(0) to CF(1) or is implicated in proton conduction. This chain is ATP synthase subunit delta, found in Laribacter hongkongensis (strain HLHK9).